We begin with the raw amino-acid sequence, 266 residues long: Adaptin ear-binding coat-associated protein 2 (266 aa).

Disordered stretches follow at residues 164-191 (SMKK…LPPP) and 244-266 (GDFT…WVQF). Ser181 carries the phosphoserine modification. Residues 243–246 (WGDF) carry the WXXF motif 1 motif. Low complexity predominate over residues 247 to 258 (TKSTGSTSSQTQ). A WXXF motif 2 motif is present at residues 263-266 (WVQF).

The protein belongs to the NECAP family. As to quaternary structure, interacts with AP1G1 and AP2A1 components of the adapter protein complexes AP-1 and AP-2. Interacts with the GAE domain proteins GGA1, GGA2 and GGA3.

It is found in the cytoplasmic vesicle. It localises to the clathrin-coated vesicle membrane. The protein localises to the cell membrane. Its function is as follows. Involved in endocytosis. The polypeptide is Adaptin ear-binding coat-associated protein 2 (NECAP2) (Bos taurus (Bovine)).